Here is a 400-residue protein sequence, read N- to C-terminus: GTPase-binding protein rid1 (400 aa).

Over residues 16–27 (LSSDGLSESVNS) the composition is skewed to polar residues. The tract at residues 16 to 47 (LSSDGLSESVNSSDREDSLSFQTPSTPSEDEM) is disordered. A GBD/FH3 domain is found at 39-400 (PSTPSEDEMP…PYKLVQTGST (362 aa)).

Its subcellular location is the cytoplasm. In Schizosaccharomyces pombe (strain 972 / ATCC 24843) (Fission yeast), this protein is GTPase-binding protein rid1 (rid1).